The chain runs to 626 residues: Chaperone protein HtpG (626 aa).

The segment at 1–341 is a; substrate-binding; sequence METKQFKAES…SEDLSLNISR (341 aa). The segment at 342–552 is b; sequence EMLQHDRQLK…EGEISIEMEK (211 aa). The interval 553-626 is c; the sequence is ILSAMPNNEN…FSNSICKLMI (74 aa).

This sequence belongs to the heat shock protein 90 family. As to quaternary structure, homodimer.

It localises to the cytoplasm. Molecular chaperone. Has ATPase activity. The sequence is that of Chaperone protein HtpG from Alkaliphilus oremlandii (strain OhILAs) (Clostridium oremlandii (strain OhILAs)).